The primary structure comprises 642 residues: Threonine--tRNA ligase (642 aa).

Residues 1-58 (MQVAGKELEVQQGALCGEVLKEALSKKQFKNVVVAKCGDTLLDLTTTVPADCTDLEPV) enclose the TGS domain. Residues 239-530 (DHRKLGTQLD…LLEHTGGALP (292 aa)) form a catalytic region. Residues Cys331, His382, and His507 each contribute to the Zn(2+) site.

It belongs to the class-II aminoacyl-tRNA synthetase family. As to quaternary structure, homodimer. Requires Zn(2+) as cofactor.

The protein resides in the cytoplasm. It catalyses the reaction tRNA(Thr) + L-threonine + ATP = L-threonyl-tRNA(Thr) + AMP + diphosphate + H(+). Functionally, catalyzes the attachment of threonine to tRNA(Thr) in a two-step reaction: L-threonine is first activated by ATP to form Thr-AMP and then transferred to the acceptor end of tRNA(Thr). Also edits incorrectly charged L-seryl-tRNA(Thr). The chain is Threonine--tRNA ligase from Maridesulfovibrio salexigens (strain ATCC 14822 / DSM 2638 / NCIMB 8403 / VKM B-1763) (Desulfovibrio salexigens).